A 60-amino-acid chain; its full sequence is Small ribosomal subunit protein eS17 (60 aa).

This sequence belongs to the eukaryotic ribosomal protein eS17 family.

The polypeptide is Small ribosomal subunit protein eS17 (Methanosphaera stadtmanae (strain ATCC 43021 / DSM 3091 / JCM 11832 / MCB-3)).